Consider the following 305-residue polypeptide: Sulfate adenylyltransferase subunit 2 (305 aa).

Belongs to the PAPS reductase family. CysD subfamily. In terms of assembly, heterodimer composed of CysD, the smaller subunit, and CysN.

It carries out the reaction sulfate + ATP + H(+) = adenosine 5'-phosphosulfate + diphosphate. The protein operates within sulfur metabolism; hydrogen sulfide biosynthesis; sulfite from sulfate: step 1/3. In terms of biological role, with CysN forms the ATP sulfurylase (ATPS) that catalyzes the adenylation of sulfate producing adenosine 5'-phosphosulfate (APS) and diphosphate, the first enzymatic step in sulfur assimilation pathway. APS synthesis involves the formation of a high-energy phosphoric-sulfuric acid anhydride bond driven by GTP hydrolysis by CysN coupled to ATP hydrolysis by CysD. The polypeptide is Sulfate adenylyltransferase subunit 2 (Pseudomonas fluorescens (strain SBW25)).